A 359-amino-acid chain; its full sequence is Uroporphyrinogen decarboxylase (359 aa).

Coproporphyrinogen III contacts are provided by Arg-28, Ala-30, Arg-32, Asp-79, Tyr-157, Ser-212, and His-335.

Belongs to the uroporphyrinogen decarboxylase family. Monomer.

It localises to the nucleus. It is found in the cytoplasm. The enzyme catalyses uroporphyrinogen III + 4 H(+) = coproporphyrinogen III + 4 CO2. It catalyses the reaction uroporphyrinogen I + 4 H(+) = coproporphyrinogen I + 4 CO2. Its pathway is porphyrin-containing compound metabolism; protoporphyrin-IX biosynthesis; coproporphyrinogen-III from 5-aminolevulinate: step 4/4. Functionally, catalyzes the sequential decarboxylation of four acetate groups of uroporphyrinogen-III (octacarboxyporphyrin) to yield coproporphyrinogen-III (tetracarboxyporphyrin) with the formation of intermediate hepta-, hexa- and penta-carboxylate porphyrinogens in the heme biosynthesis pathway. Acts on a number of porphyrinogens, but only coproporphyrinogen III can ultimately be converted to heme. The polypeptide is Uroporphyrinogen decarboxylase (hem12) (Schizosaccharomyces pombe (strain 972 / ATCC 24843) (Fission yeast)).